The following is a 224-amino-acid chain: Glycerol-3-phosphate acyltransferase (224 aa).

6 helical membrane passes run 3-23 (IFLS…IGSL), 54-74 (VFGY…VVFA), 90-112 (LYFY…PIYF), 127-147 (LISI…LLLF), 152-172 (VSLS…IPWM), and 183-203 (GFGQ…LIFW).

Belongs to the PlsY family. In terms of assembly, probably interacts with PlsX.

It is found in the cell membrane. It carries out the reaction an acyl phosphate + sn-glycerol 3-phosphate = a 1-acyl-sn-glycero-3-phosphate + phosphate. It functions in the pathway lipid metabolism; phospholipid metabolism. Its function is as follows. Catalyzes the transfer of an acyl group from acyl-phosphate (acyl-PO(4)) to glycerol-3-phosphate (G3P) to form lysophosphatidic acid (LPA). This enzyme utilizes acyl-phosphate as fatty acyl donor, but not acyl-CoA or acyl-ACP. The protein is Glycerol-3-phosphate acyltransferase of Mycoplasmopsis synoviae (strain 53) (Mycoplasma synoviae).